The primary structure comprises 476 residues: Glutamate--tRNA ligase (476 aa).

Positions 9–19 match the 'HIGH' region motif; it reads PSPTGLFHIGT. The 'KMSKS' region motif lies at 248–252; that stretch reads KLSKR. Lys251 lines the ATP pocket.

Belongs to the class-I aminoacyl-tRNA synthetase family. Glutamate--tRNA ligase type 1 subfamily. Monomer.

The protein localises to the cytoplasm. The catalysed reaction is tRNA(Glu) + L-glutamate + ATP = L-glutamyl-tRNA(Glu) + AMP + diphosphate. Its function is as follows. Catalyzes the attachment of glutamate to tRNA(Glu) in a two-step reaction: glutamate is first activated by ATP to form Glu-AMP and then transferred to the acceptor end of tRNA(Glu). This chain is Glutamate--tRNA ligase, found in Prochlorococcus marinus (strain AS9601).